Here is a 364-residue protein sequence, read N- to C-terminus: Phenylalanine dehydrogenase (364 aa).

R62 serves as a coordination point for NAD(+). K86 provides a ligand contact to L-phenylalanine. The active-site Proton donor/acceptor is K98. NAD(+)-binding positions include D133, S164, T168, 255 to 256, and 276 to 278; these read AM and AAN. N278 provides a ligand contact to L-phenylalanine.

This sequence belongs to the Glu/Leu/Phe/Val dehydrogenases family.

It catalyses the reaction L-phenylalanine + NAD(+) + H2O = 3-phenylpyruvate + NH4(+) + NADH + H(+). It functions in the pathway amino-acid biosynthesis; L-phenylalanine biosynthesis; L-phenylalanine from phenylpyruvate (PDH route): step 1/1. In terms of biological role, catalyzes the reversible NAD(+)-dependent oxidative deamination of L-phenylalanine to phenylpyruvate. The protein is Phenylalanine dehydrogenase of Rhodococcus jostii (strain RHA1).